Here is a 90-residue protein sequence, read N- to C-terminus: MEANSRVMVRVLLLALVVQVTLSQHWSYGWLPGGKRSVGELEATIRMMGTGEVVSLPEEASAQTQERLRPYNVINDDSSHFDRKKRSPNK.

The signal sequence occupies residues 1-23; the sequence is MEANSRVMVRVLLLALVVQVTLS. At glutamine 24 the chain carries Pyrrolidone carboxylic acid. The residue at position 33 (glycine 33) is a Glycine amide. Positions 56 to 90 are disordered; the sequence is LPEEASAQTQERLRPYNVINDDSSHFDRKKRSPNK.

This sequence belongs to the GnRH family.

The protein resides in the secreted. Functionally, stimulates the secretion of gonadotropins. This is Progonadoliberin-3 (gnrh3) from Dicentrarchus labrax (European seabass).